The primary structure comprises 696 residues: Two-component response regulator ORR22 (696 aa).

Positions 27 to 142 constitute a Response regulatory domain; sequence RVLAVDDDPV…ELRNIWQHVV (116 aa). Asp-78 carries the 4-aspartylphosphate modification. Positions 154–214 are disordered; that stretch reads LDFSKECNKP…DYQENDEPSA (61 aa). Positions 176–185 are enriched in polar residues; that stretch reads TCGSSDQNGR. Residues 195–211 are compositionally biased toward acidic residues; that stretch reads GEDDDEGDDNDYQENDE. Positions 214-273 form a DNA-binding region, myb-like GARP; that stretch reads AAKKPRVVWSVELHRKFVAAVNQLGIDKAVPKRILELMNVEKLTRENVASHLQKYRLYLK.

It belongs to the ARR family. Type-B subfamily. Two-component system major event consists of a His-to-Asp phosphorelay between a sensor histidine kinase (HK) and a response regulator (RR). In plants, the His-to-Asp phosphorelay involves an additional intermediate named Histidine-containing phosphotransfer protein (HPt). This multistep phosphorelay consists of a His-Asp-His-Asp sequential transfer of a phosphate group between first a His and an Asp of the HK protein, followed by the transfer to a conserved His of the HPt protein and finally the transfer to an Asp in the receiver domain of the RR protein.

It localises to the nucleus. In terms of biological role, transcriptional activator that binds specific DNA sequence. Functions as a response regulator involved in His-to-Asp phosphorelay signal transduction system. Phosphorylation of the Asp residue in the receiver domain activates the ability of the protein to promote the transcription of target genes. May directly activate some type-A response regulators in response to cytokinins. The polypeptide is Two-component response regulator ORR22 (Oryza sativa subsp. indica (Rice)).